The primary structure comprises 373 residues: LIM domain-binding protein 1 (373 aa).

Disordered stretches follow at residues 248-297 (PPAE…LSSQ) and 329-373 (DAAN…QASQ). Residues 266-282 (SGGSTMSSGGGNTNNSN) show a composition bias toward low complexity. Residues 288-297 (PASTFALSSQ) are compositionally biased toward polar residues. An LIM interaction domain (LID) domain is found at 298–337 (DVMVVGEPTLMGGEFGDEDERLITRLENTQFDAANGIDDE).

Belongs to the LDB family. In terms of assembly, forms homodimers and heterodimers. Interacts with and activates lhx1/lim1. The stoichiometry of lhx1/lim1 and ldb1 is important for their function and an excess of ldb1 can inhibit lhx1/lim1 function. When bound to lhx1/lim1, escapes degradation by rnf12. Interacts with the N-terminal region of rnf12. Post-translationally, undergoes rnf12-mediated ubiquitin-proteasome-dependent degradation.

The protein resides in the nucleus. Functionally, binds to the LIM domain of a wide variety of LIM domain-containing transcription factors. Acts as a coactivator together with otx2 to stimulate lhx1/lim1-mediated activation of the gsc promoter in the Spemann organizer. Acts synergistically with lhx1/lim1 and ssbp in axis formation. This is LIM domain-binding protein 1 from Xenopus tropicalis (Western clawed frog).